The sequence spans 393 residues: Elongation factor Tu (393 aa).

The region spanning Lys6–Arg204 is the tr-type G domain. The interval Gly15–Thr22 is G1. Gly15–Thr22 contributes to the GTP binding site. Thr22 serves as a coordination point for Mg(2+). The interval Gly58–Ser62 is G2. Residues Asp79–Gly82 form a G3 region. GTP-binding positions include Asp79–His83 and Asn134–Asp137. The G4 stretch occupies residues Asn134–Asp137. The interval Ser172 to Val174 is G5.

Belongs to the TRAFAC class translation factor GTPase superfamily. Classic translation factor GTPase family. EF-Tu/EF-1A subfamily. As to quaternary structure, monomer.

The protein localises to the cytoplasm. It carries out the reaction GTP + H2O = GDP + phosphate + H(+). GTP hydrolase that promotes the GTP-dependent binding of aminoacyl-tRNA to the A-site of ribosomes during protein biosynthesis. This chain is Elongation factor Tu, found in Anaplasma phagocytophilum (strain HZ).